Here is a 114-residue protein sequence, read N- to C-terminus: MICOS complex subunit MIC12 (114 aa).

The chain crosses the membrane as a helical span at residues 4–26; the sequence is IAKLGSFTLVSGVVATSCYYYFI.

This sequence belongs to the MICOS complex subunit Mic12 family. In terms of assembly, component of the mitochondrial contact site and cristae organizing system (MICOS) complex.

It localises to the mitochondrion inner membrane. Component of the MICOS complex, a large protein complex of the mitochondrial inner membrane that plays crucial roles in the maintenance of crista junctions, inner membrane architecture, and formation of contact sites to the outer membrane. This Candida glabrata (strain ATCC 2001 / BCRC 20586 / JCM 3761 / NBRC 0622 / NRRL Y-65 / CBS 138) (Yeast) protein is MICOS complex subunit MIC12 (AIM5).